Consider the following 1655-residue polypeptide: Nucleoporin NUP188 (1655 aa).

Positions 35 to 62 (KQLAQIRQFLKANKTNLIESLNTIRQNV) form a coiled coil. The tract at residues 250–271 (LSYLSETLISRISSLFTITTIL) is leucine-zipper. S340 carries the phosphoserine modification. Residue K406 forms a Glycyl lysine isopeptide (Lys-Gly) (interchain with G-Cter in ubiquitin) linkage.

The protein belongs to the Nup188 family. As to quaternary structure, component of the nuclear pore complex (NPC). NPC constitutes the exclusive means of nucleocytoplasmic transport. NPCs allow the passive diffusion of ions and small molecules and the active, nuclear transport receptor-mediated bidirectional transport of macromolecules such as proteins, RNAs, ribonucleoparticles (RNPs), and ribosomal subunits across the nuclear envelope. Due to its 8-fold rotational symmetry, all subunits are present with 8 copies or multiples thereof. Interacts with POM152 and NIC96.

It localises to the nucleus. The protein localises to the nuclear pore complex. The protein resides in the nucleus membrane. Functionally, functions as a component of the nuclear pore complex (NPC). NPC components, collectively referred to as nucleoporins (NUPs), can play the role of both NPC structural components and of docking or interaction partners for transiently associated nuclear transport factors. NUP188 probably plays an important role in NPC assembly and organization. This is Nucleoporin NUP188 (NUP188) from Saccharomyces cerevisiae (strain ATCC 204508 / S288c) (Baker's yeast).